The sequence spans 252 residues: 4-hydroxy-tetrahydrodipicolinate reductase (252 aa).

8–13 (GALGRM) is a binding site for NAD(+). Arg-36 provides a ligand contact to NADP(+). Residues 89–91 (GTT) and 114–117 (SSNF) each bind NAD(+). Residue His-146 is the Proton donor/acceptor of the active site. His-147 lines the (S)-2,3,4,5-tetrahydrodipicolinate pocket. Residue Lys-150 is the Proton donor of the active site. (S)-2,3,4,5-tetrahydrodipicolinate is bound at residue 156 to 157 (GT).

Belongs to the DapB family.

It is found in the cytoplasm. It carries out the reaction (S)-2,3,4,5-tetrahydrodipicolinate + NAD(+) + H2O = (2S,4S)-4-hydroxy-2,3,4,5-tetrahydrodipicolinate + NADH + H(+). It catalyses the reaction (S)-2,3,4,5-tetrahydrodipicolinate + NADP(+) + H2O = (2S,4S)-4-hydroxy-2,3,4,5-tetrahydrodipicolinate + NADPH + H(+). It functions in the pathway amino-acid biosynthesis; L-lysine biosynthesis via DAP pathway; (S)-tetrahydrodipicolinate from L-aspartate: step 4/4. Functionally, catalyzes the conversion of 4-hydroxy-tetrahydrodipicolinate (HTPA) to tetrahydrodipicolinate. The protein is 4-hydroxy-tetrahydrodipicolinate reductase of Methanoculleus marisnigri (strain ATCC 35101 / DSM 1498 / JR1).